The primary structure comprises 61 residues: Translational regulator CsrA (61 aa).

The protein belongs to the CsrA/RsmA family. As to quaternary structure, homodimer; the beta-strands of each monomer intercalate to form a hydrophobic core, while the alpha-helices form wings that extend away from the core.

The protein resides in the cytoplasm. In terms of biological role, a key translational regulator that binds mRNA to regulate translation initiation and/or mRNA stability. Mediates global changes in gene expression, shifting from rapid growth to stress survival by linking envelope stress, the stringent response and the catabolite repression systems. Usually binds in the 5'-UTR; binding at or near the Shine-Dalgarno sequence prevents ribosome-binding, repressing translation, binding elsewhere in the 5'-UTR can activate translation and/or stabilize the mRNA. Its function is antagonized by small RNA(s). This is Translational regulator CsrA from Actinobacillus succinogenes (strain ATCC 55618 / DSM 22257 / CCUG 43843 / 130Z).